The sequence spans 127 residues: MSKPAAPRRVGEKEALAVATTVRGSPYKLNLVAGLIRGKKAGDALNILTFSKKAMAVDVRKVLASAIANAENNHNLDVDALVVKEASVGKSIVMKRFATRGRGKSTRIIKPFARLRVVVREQQEEAE.

This sequence belongs to the universal ribosomal protein uL22 family. As to quaternary structure, part of the 50S ribosomal subunit.

In terms of biological role, this protein binds specifically to 23S rRNA; its binding is stimulated by other ribosomal proteins, e.g. L4, L17, and L20. It is important during the early stages of 50S assembly. It makes multiple contacts with different domains of the 23S rRNA in the assembled 50S subunit and ribosome. Functionally, the globular domain of the protein is located near the polypeptide exit tunnel on the outside of the subunit, while an extended beta-hairpin is found that lines the wall of the exit tunnel in the center of the 70S ribosome. The sequence is that of Large ribosomal subunit protein uL22 from Rhizorhabdus wittichii (strain DSM 6014 / CCUG 31198 / JCM 15750 / NBRC 105917 / EY 4224 / RW1) (Sphingomonas wittichii).